We begin with the raw amino-acid sequence, 253 residues long: uncharacterized protein (253 aa).

The NADP(+) site is built by isoleucine 17, serine 36, aspartate 62, asparagine 89, tyrosine 158, lysine 162, valine 191, and threonine 193. The active-site Proton donor is the tyrosine 158. Lysine 162 (lowers pKa of active site Tyr) is an active-site residue.

It belongs to the short-chain dehydrogenases/reductases (SDR) family.

The protein localises to the cytoplasm. It localises to the nucleus. This is an uncharacterized protein from Schizosaccharomyces pombe (strain 972 / ATCC 24843) (Fission yeast).